The sequence spans 209 residues: dITP/XTP pyrophosphatase (209 aa).

Residue 22 to 27 (SHNQGK) participates in substrate binding. Asp-83 (proton acceptor) is an active-site residue. Asp-83 provides a ligand contact to Mg(2+). Substrate is bound by residues Ser-84, 167–170 (FGYD), Lys-190, and 195–196 (HR).

The protein belongs to the HAM1 NTPase family. In terms of assembly, homodimer. Mg(2+) is required as a cofactor.

It carries out the reaction XTP + H2O = XMP + diphosphate + H(+). The enzyme catalyses dITP + H2O = dIMP + diphosphate + H(+). It catalyses the reaction ITP + H2O = IMP + diphosphate + H(+). Its function is as follows. Pyrophosphatase that catalyzes the hydrolysis of nucleoside triphosphates to their monophosphate derivatives, with a high preference for the non-canonical purine nucleotides XTP (xanthosine triphosphate), dITP (deoxyinosine triphosphate) and ITP. Seems to function as a house-cleaning enzyme that removes non-canonical purine nucleotides from the nucleotide pool, thus preventing their incorporation into DNA/RNA and avoiding chromosomal lesions. In Zymomonas mobilis subsp. mobilis (strain ATCC 31821 / ZM4 / CP4), this protein is dITP/XTP pyrophosphatase.